A 200-amino-acid polypeptide reads, in one-letter code: NADH-quinone oxidoreductase subunit C (200 aa).

It belongs to the complex I 30 kDa subunit family. NDH-1 is composed of 14 different subunits. Subunits NuoB, C, D, E, F, and G constitute the peripheral sector of the complex.

The protein localises to the cell inner membrane. The catalysed reaction is a quinone + NADH + 5 H(+)(in) = a quinol + NAD(+) + 4 H(+)(out). Its function is as follows. NDH-1 shuttles electrons from NADH, via FMN and iron-sulfur (Fe-S) centers, to quinones in the respiratory chain. The immediate electron acceptor for the enzyme in this species is believed to be ubiquinone. Couples the redox reaction to proton translocation (for every two electrons transferred, four hydrogen ions are translocated across the cytoplasmic membrane), and thus conserves the redox energy in a proton gradient. This Rhizobium etli (strain ATCC 51251 / DSM 11541 / JCM 21823 / NBRC 15573 / CFN 42) protein is NADH-quinone oxidoreductase subunit C.